A 472-amino-acid polypeptide reads, in one-letter code: FAD-dependent monooxygenase dpmaE (472 aa).

The N-terminal stretch at 1–24 (MSQRQFKVIIIGGSVTGLTLAHSL) is a signal peptide. FAD is bound by residues E35, G49, and R108. N-linked (GlcNAc...) asparagine glycosylation is found at N128 and N179. The FAD site is built by D305 and A318. N369 carries N-linked (GlcNAc...) asparagine glycosylation. A helical transmembrane segment spans residues 440 to 460 (LLPLMFTLPLLYFGLSWIVGI).

It belongs to the paxM FAD-dependent monooxygenase family. FAD is required as a cofactor.

It is found in the membrane. The protein operates within secondary metabolite biosynthesis; terpenoid biosynthesis. Its function is as follows. FAD-dependent monooxygenase; part of the gene cluster that mediates the biosynthesis of the diterpenoid pyrones subglutinols A and B. The first step of the pathway is the synthesis of the alpha-pyrone moiety by the polyketide synthase dpmaA via condensation of one acetyl-CoA starter unit with 3 malonyl-CoA units and 2 methylations. The alpha-pyrone is then combined with geranylgeranyl pyrophosphate (GGPP) formed by the GGPP synthase dpmaD through the action of the prenyltransferase dpmaC to yield a linear alpha-pyrone diterpenoid. Subsequent steps in the diterpenoid pyrone biosynthetic pathway involve the decalin core formation, which is initiated by the epoxidation of the C10-C11 olefin by the FAD-dependent oxidoreductase dpmaE, and is followed by a cyclization cascade catalyzed by the terpene cyclase dpmaB. The dehydrogenase dpmaF is then involved in tetrahydrofuran (THF) ring formation at the C5 unit to complete the formation of subglutinols A and B. This Metarhizium anisopliae (Entomophthora anisopliae) protein is FAD-dependent monooxygenase dpmaE.